A 326-amino-acid chain; its full sequence is Membrane-associated kinase regulator 5 (326 aa).

Disordered regions lie at residues 188-239 (TKKQ…GMSP) and 267-326 (GSRE…KISD). 2 stretches are compositionally biased toward low complexity: residues 190–202 (KQSS…PTSS) and 270–305 (ESSL…SSDS).

In terms of tissue distribution, expressed in roots.

It localises to the cell membrane. The protein localises to the cytoplasm. Its subcellular location is the cytosol. Functionally, positive effector of CLE45 peptide signaling. Post-transcriptionally regulated amplifier of the CLE45 peptide signal that acts downstream of BAM3 in the regulation of the transition of root protophloem cells from proliferation to differentiation; thus preventing primary root elongation but stimulating lateral roots development. The chain is Membrane-associated kinase regulator 5 from Arabidopsis thaliana (Mouse-ear cress).